The sequence spans 298 residues: DNA-binding transcriptional activator HetR (298 aa).

Serine 152 is an active-site residue.

The protein belongs to the peptidase S48 family. In terms of assembly, homodimer; disulfide-linked.

Controls heterocyst differentiation. Dimerization is required for DNA-binding. Has both a protease and a DNA-binding activity. In Nostoc sp. (strain PCC 9229), this protein is DNA-binding transcriptional activator HetR.